The chain runs to 676 residues: DNA ligase (676 aa).

The span at 1-10 shows a compositional bias: basic and acidic residues; sequence MTQAHHDDAG. A disordered region spans residues 1-23; sequence MTQAHHDDAGARNALQGGLATDP. Residues 52–56 and 95–96 each bind NAD(+); these read DAAFD and SL. Lys148 acts as the N6-AMP-lysine intermediate in catalysis. The NAD(+) site is built by Arg169, Glu203, and Lys330. The Zn(2+) site is built by Cys420, Cys423, Cys436, and Cys441. The BRCT domain occupies 593-676; it reads EAEGPLAGLT…DKLIAERRGG (84 aa).

Belongs to the NAD-dependent DNA ligase family. LigA subfamily. Mg(2+) serves as cofactor. Requires Mn(2+) as cofactor.

The catalysed reaction is NAD(+) + (deoxyribonucleotide)n-3'-hydroxyl + 5'-phospho-(deoxyribonucleotide)m = (deoxyribonucleotide)n+m + AMP + beta-nicotinamide D-nucleotide.. Its function is as follows. DNA ligase that catalyzes the formation of phosphodiester linkages between 5'-phosphoryl and 3'-hydroxyl groups in double-stranded DNA using NAD as a coenzyme and as the energy source for the reaction. It is essential for DNA replication and repair of damaged DNA. This is DNA ligase from Sorangium cellulosum (strain So ce56) (Polyangium cellulosum (strain So ce56)).